A 370-amino-acid chain; its full sequence is Protein phosphatase 2C homolog 2 (370 aa).

Positions 23–291 constitute a PPM-type phosphatase domain; sequence HFGVSHMQGW…DNMTICIVAF (269 aa). Residues aspartate 63, glycine 64, aspartate 233, and aspartate 282 each coordinate Mn(2+). Phosphoserine occurs at positions 355 and 357.

It belongs to the PP2C family. As to quaternary structure, monomer. Mg(2+) serves as cofactor. It depends on Mn(2+) as a cofactor.

Its subcellular location is the nucleus. The protein resides in the cytoplasm. The protein localises to the cytosol. The catalysed reaction is O-phospho-L-seryl-[protein] + H2O = L-seryl-[protein] + phosphate. It carries out the reaction O-phospho-L-threonyl-[protein] + H2O = L-threonyl-[protein] + phosphate. Its activity is regulated as follows. Activity is reduced when phosphosrylated at Ser-355/Ser-357. Its function is as follows. Dephosphorylating regulator for many key proteins. Has an important role in osmotic stability and cell shape control. It may negatively regulate the osmosensing signal transmitted through wis1 map kinase. This Schizosaccharomyces pombe (strain 972 / ATCC 24843) (Fission yeast) protein is Protein phosphatase 2C homolog 2 (ptc2).